A 603-amino-acid chain; its full sequence is Grainyhead-like protein 3 homolog (603 aa).

The transcription activation stretch occupies residues 30 to 95 (EAWKTYLENP…QGKKFYHSMD (66 aa)). One can recognise a Grh/CP2 DB domain in the interval 226–461 (GLKSDFEYTL…DLETQPVLFI (236 aa)).

The protein belongs to the grh/CP2 family. Grainyhead subfamily. In terms of assembly, homodimer, also forms heterodimers with GRHL1 and GRHL2. Interacts with LMO4.

It localises to the nucleus. Functionally, transcription factor playing important roles in primary neurulation and in the differentiation of stratified epithelia of both ectodermal and endodermal origin. Binds directly to the consensus DNA sequence 5'-AACCGGTT-3' acting as an activator and repressor on distinct target genes. Essential for epidermal differentiation and barrier formation at the end of embryogenesis with TGM3 as critical direct target. Exhibits functional redundancy with GRHL2 in epidermal morphogenetic events such as eyelid fusion and epidermal wound repair. Despite being dispensable during normal epidermal homeostasis in the adulthood, is again required for barrier repair after immune-mediated epidermal damage, regulates distinct gene batteries in embryonic epidermal differentiation and adult epidermal barrier reformation after injury. Plays unique and cooperative roles with GRHL2 in establishing distinct zones of primary neurulation. Essential for spinal closure, functions cooperatively with GRHL2 in closure 2 (forebrain/midbrain boundary) and posterior neuropore closure. Also required for proper development of the oral periderm. No genetic interaction with GRHL1, no functional cooperativity due to diverse target gene selectivity. This Mus musculus (Mouse) protein is Grainyhead-like protein 3 homolog.